The following is a 456-amino-acid chain: Ribosome assembly protein METTL17, mitochondrial (456 aa).

A mitochondrion-targeting transit peptide spans 1-19 (MAAALKCLLTLGRWCPGLG). [4Fe-4S] cluster contacts are provided by C333, C339, C347, and C404.

This sequence belongs to the methyltransferase superfamily. Rsm22 family. As to quaternary structure, associates with the mitochondrial ribosome (mitoribosome).

It localises to the mitochondrion matrix. Its function is as follows. Mitochondrial ribosome (mitoribosome) assembly factor. Binds at the interface of the head and body domains of the mitochondrial small ribosomal subunit (mt-SSU), occluding the mRNA channel and preventing compaction of the head domain towards the body. Probable inactive methyltransferase: retains the characteristic folding and ability to bind S-adenosyl-L-methionine, but it probably lost its methyltransferase activity. In Homo sapiens (Human), this protein is Ribosome assembly protein METTL17, mitochondrial.